The primary structure comprises 202 residues: Orotate phosphoribosyltransferase (202 aa).

Residues Lys93 and 113–121 (EDIITTGGS) each bind 5-phospho-alpha-D-ribose 1-diphosphate. Orotate is bound by residues Thr117 and Arg145.

Belongs to the purine/pyrimidine phosphoribosyltransferase family. PyrE subfamily. Homodimer. It depends on Mg(2+) as a cofactor.

The catalysed reaction is orotidine 5'-phosphate + diphosphate = orotate + 5-phospho-alpha-D-ribose 1-diphosphate. It participates in pyrimidine metabolism; UMP biosynthesis via de novo pathway; UMP from orotate: step 1/2. Catalyzes the transfer of a ribosyl phosphate group from 5-phosphoribose 1-diphosphate to orotate, leading to the formation of orotidine monophosphate (OMP). In Campylobacter concisus (strain 13826), this protein is Orotate phosphoribosyltransferase.